The following is a 155-amino-acid chain: 6,7-dimethyl-8-ribityllumazine synthase (155 aa).

5-amino-6-(D-ribitylamino)uracil-binding positions include Phe23, 57 to 59, and 81 to 83; these read AFE and AVI. Residue 86-87 participates in (2S)-2-hydroxy-3-oxobutyl phosphate binding; that stretch reads ST. His89 serves as the catalytic Proton donor. Residue Phe114 coordinates 5-amino-6-(D-ribitylamino)uracil. (2S)-2-hydroxy-3-oxobutyl phosphate is bound at residue Arg128.

Belongs to the DMRL synthase family.

It carries out the reaction (2S)-2-hydroxy-3-oxobutyl phosphate + 5-amino-6-(D-ribitylamino)uracil = 6,7-dimethyl-8-(1-D-ribityl)lumazine + phosphate + 2 H2O + H(+). The protein operates within cofactor biosynthesis; riboflavin biosynthesis; riboflavin from 2-hydroxy-3-oxobutyl phosphate and 5-amino-6-(D-ribitylamino)uracil: step 1/2. Its function is as follows. Catalyzes the formation of 6,7-dimethyl-8-ribityllumazine by condensation of 5-amino-6-(D-ribitylamino)uracil with 3,4-dihydroxy-2-butanone 4-phosphate. This is the penultimate step in the biosynthesis of riboflavin. This is 6,7-dimethyl-8-ribityllumazine synthase from Dehalococcoides mccartyi (strain ATCC BAA-2100 / JCM 16839 / KCTC 5957 / BAV1).